Reading from the N-terminus, the 61-residue chain is MAKKSMVVKNQRPAKFSTQAYTRCERCGRPHSVYRKFKLCRICLRELAYKGQLPGVKKASW.

Cysteine 24, cysteine 27, cysteine 40, and cysteine 43 together coordinate Zn(2+).

Belongs to the universal ribosomal protein uS14 family. Zinc-binding uS14 subfamily. As to quaternary structure, part of the 30S ribosomal subunit. Contacts proteins S3 and S10. The cofactor is Zn(2+).

Functionally, binds 16S rRNA, required for the assembly of 30S particles and may also be responsible for determining the conformation of the 16S rRNA at the A site. The polypeptide is Small ribosomal subunit protein uS14B (Lactococcus lactis subsp. lactis (strain IL1403) (Streptococcus lactis)).